Here is a 799-residue protein sequence, read N- to C-terminus: MKLTDADNAADGIFFPALEQNMMGAVLINENDEVMFFNPAAEKLWGYKREEVIGNNIDMLIPRDLRPAHPEYIRHNREGGKARVEGMSRELQLEKKDGSKIWTRFALSKVSAEGKVYYLALVRDASVEMAQKEQTRQLIIAVDHLDRPVIVLDPERHIVQCNRAFTEMFGYCISEASGMQPDTLLNIPEFPADNRIRLQQLLWKTARDQDEFLLLTRTGEKIWIKASISPVYDVLAHLQNLVMTFSDITEERQIRQLEGNILAAMCSSPPFHEMGEIICRNIESVLNESHVSLFALRNGMPIHWASSSHGAEIQNAQSWSATIRQRDGAPAGILQIKTSSGAETSAFIERVADISQHMAALALEQEKSRQHIEQLIQFDPMTGLPNRNNLHNYLDDLVDKAVSPVVYLIGVDHIQDVIDSLGYAWADQALLEVVNRFREKLKPDQYLCRIEGTQFVLVSLENDVSNITQIADELRNVVSKPIMIDDKPFPLTLSIGISYDLGKNRDYLLSTAHNAMDYIRKNGGNGWQFFSPAMNEMVKERLVLGAALKEAISNNQLKLVYQPQIFAETGELYGIEALARWHDPLHGHVPPSRFIPLAEEIGEIENIGRWVIAEACRQLAEWRSQNIHIPALSVNLSALHFRSNQLPNQVSDAMHAWGIDGHQLTVEITESMMMEHDTEIFKRIQILRDMGVGLSVDDFGTGFSGLSRLVSLPVTEIKIDKSFVDRCLTEKRILALLEAITSIGQSLNLTVVAEGVETKEQFEMLRKIHCRVIQGYFFSRPLPAEEIPGWMSSVLPLKI.

A PAS 1 domain is found at 10 to 81 (ADGIFFPALE…YIRHNREGGK (72 aa)). Residues H69 and M87 each coordinate heme. The 74-residue stretch at 134–207 (QTRQLIIAVD…LQQLLWKTAR (74 aa)) folds into the PAS 2 domain. Positions 208–260 (DQDEFLLLTRTGEKIWIKASISPVYDVLAHLQNLVMTFSDITEERQIRQLEGN) constitute a PAC domain. The GGDEF domain occupies 402–532 (VSPVVYLIGV…GGNGWQFFSP (131 aa)). In terms of domain architecture, EAL spans 541–795 (RLVLGAALKE…EIPGWMSSVL (255 aa)).

As to quaternary structure, homodimer; has been previously suggested to be a homotetramer based on size exclusion chromatography. Forms a complex with DosC. It depends on heme as a cofactor. Mg(2+) is required as a cofactor. In terms of processing, the heme distal ligand is coordinated by Met-87 in the active Fe(2+) (ferrous) form, by O(2) in the O(2)-bound form and by H(2)O in the inactive Fe(3+) (ferric) form.

It catalyses the reaction 3',3'-c-di-GMP + H2O = 5'-phosphoguanylyl(3'-&gt;5')guanosine + H(+). With respect to regulation, has c-di-GMP PDE activity in both Fe(2+) and Fe(3+)-bound forms; this activity is increased 6-7 fold by binding of O(2) and CO and NO. Has cAMP PDE activity only when the heme is in the Fe(2+) form. cAMP PDE activity is inhibited by oxidation of the heme iron and by binding of external ligands such as CO and NO. Also strongly inhibited by etazolate hydrochloride, a selective cAMP PDE inhibitor. PDE activity is inhibited in the absence of oxygen. In terms of biological role, heme-based oxygen sensor protein displaying phosphodiesterase (PDE) activity toward c-di-GMP in response to oxygen availability. Involved in the modulation of intracellular c-di-GMP levels, in association with DosC which catalyzes the biosynthesis of c-di-GMP (diguanylate cyclase activity). Cyclic-di-GMP is a second messenger which controls cell surface-associated traits in bacteria. Has very poor PDE activity on cAMP but is not active with cGMP, bis(p-nitrophenyl) phosphate or p-nitrophenyl phosphate. Via its PDE activity on c-di-GMP, DosP regulates biofilm formation through the repression of transcription of the csgBAC operon, which encodes curli structural subunits. This chain is Oxygen sensor protein DosP (dosP), found in Escherichia coli (strain K12).